The chain runs to 560 residues: Oxygen-dependent choline dehydrogenase (560 aa).

8 to 37 lines the FAD pocket; sequence DYIIIGAGSAGNVLATRLTEDADVSVLLLE. The Proton acceptor role is filled by His475.

Belongs to the GMC oxidoreductase family. Requires FAD as cofactor.

It carries out the reaction choline + A = betaine aldehyde + AH2. The enzyme catalyses betaine aldehyde + NAD(+) + H2O = glycine betaine + NADH + 2 H(+). It functions in the pathway amine and polyamine biosynthesis; betaine biosynthesis via choline pathway; betaine aldehyde from choline (cytochrome c reductase route): step 1/1. Functionally, involved in the biosynthesis of the osmoprotectant glycine betaine. Catalyzes the oxidation of choline to betaine aldehyde and betaine aldehyde to glycine betaine at the same rate. In Stenotrophomonas maltophilia (strain R551-3), this protein is Oxygen-dependent choline dehydrogenase.